Reading from the N-terminus, the 306-residue chain is Homoserine kinase (306 aa).

88 to 98 (PLARGLGSSAT) is an ATP binding site.

This sequence belongs to the GHMP kinase family. Homoserine kinase subfamily.

It localises to the cytoplasm. The enzyme catalyses L-homoserine + ATP = O-phospho-L-homoserine + ADP + H(+). The protein operates within amino-acid biosynthesis; L-threonine biosynthesis; L-threonine from L-aspartate: step 4/5. Its function is as follows. Catalyzes the ATP-dependent phosphorylation of L-homoserine to L-homoserine phosphate. The sequence is that of Homoserine kinase from Synechococcus sp. (strain ATCC 27144 / PCC 6301 / SAUG 1402/1) (Anacystis nidulans).